A 311-amino-acid polypeptide reads, in one-letter code: Probable manganese-dependent inorganic pyrophosphatase (311 aa).

6 residues coordinate Mn(2+): H9, D13, D15, D77, H99, and D151.

The protein belongs to the PPase class C family. In terms of assembly, homodimer. Mn(2+) is required as a cofactor.

It is found in the cytoplasm. The catalysed reaction is diphosphate + H2O = 2 phosphate + H(+). The sequence is that of Probable manganese-dependent inorganic pyrophosphatase (ppaC) from Streptococcus gordonii (strain Challis / ATCC 35105 / BCRC 15272 / CH1 / DL1 / V288).